We begin with the raw amino-acid sequence, 264 residues long: Somatomedin-B and thrombospondin type-1 domain-containing protein (264 aa).

The first 20 residues, 1 to 20 (MRTLWMALCVLARLWPGALA), serve as a signal peptide directing secretion. One can recognise an SMB domain in the interval 24–75 (DAGRCCPGRDPACFASGWRQDRVYGTCFCDQACRLTGDCCFDYARACPARPC). Disulfide bonds link C28–C36, C28–C52, C36–C70, C50–C52, C50–C63, C56–C62, and C63–C70. One can recognise a TSP type-1 domain in the interval 74-127 (PCIVGEWSPWSGCASQCRPTARVRRRAVQQEPQNGGEPCPALEERAGCLEYATP). N227 carries an N-linked (GlcNAc...) asparagine glycan.

It belongs to the thrombospondin family.

The protein resides in the secreted. It is found in the extracellular space. Its subcellular location is the extracellular matrix. In Bos taurus (Bovine), this protein is Somatomedin-B and thrombospondin type-1 domain-containing protein (SBSPON).